A 732-amino-acid polypeptide reads, in one-letter code: Elongation factor 2 (732 aa).

The tr-type G domain maps to 19–230 (ERIRNMGIAA…VSFKDIIDLT (212 aa)). GTP is bound by residues 28–35 (AHIDHGKT), 94–98 (DTPGH), and 148–151 (NKVD). Histidine 597 carries the post-translational modification Diphthamide.

The protein belongs to the TRAFAC class translation factor GTPase superfamily. Classic translation factor GTPase family. EF-G/EF-2 subfamily.

The protein resides in the cytoplasm. Catalyzes the GTP-dependent ribosomal translocation step during translation elongation. During this step, the ribosome changes from the pre-translocational (PRE) to the post-translocational (POST) state as the newly formed A-site-bound peptidyl-tRNA and P-site-bound deacylated tRNA move to the P and E sites, respectively. Catalyzes the coordinated movement of the two tRNA molecules, the mRNA and conformational changes in the ribosome. This Thermococcus sibiricus (strain DSM 12597 / MM 739) protein is Elongation factor 2.